We begin with the raw amino-acid sequence, 545 residues long: MATNYIFVTGGVVSSLGKGIAAASLAAILEARGLNVTIMKLDPYINVDPGTMSPTQHGEVFVTQDGAETDLDLGHYERFIRTKMTKRNNFTTGKIYSEVLRKERRGDYLGATIQVIPHITNEIKDRVIAGAQGHDVVIVEVGGTVGDIESLPFLEALRQLAVQVGREHTLFMHLTLVPYIPTAGEVKTKPTQHSVKELLSIGIQPDVLICRSDRMIPPNERAKIALFCNVAERAVISLKDVNSIYQIPALLKSQGLDDFVCERFRLTCPEADLTEWEQVLYKQANPVGEVTIGMVGKYTELPDAYKSVNEALKHAGLTNRLSVSIKYIDSQDVETKGVEVLKGVDGILVPGGFGYRGVEGKIRTAQYARENKIPYLGICLGMQIALIEYARNVAGLTKANSSEFDKDCEQPVVALITEWQDAEGNTEVRTDESDLGGTMRLGAQQCHLVSGSRARELYGKETIEERHRHRYEVNNTLLPQIEKAGLKVTGLSADKKLVEIIEVPNHPWFVACQFHPEFTSTPRDGHPLFAGFVKAAYENHKKSVK.

The interval 1-266 (MATNYIFVTG…DDFVCERFRL (266 aa)) is amidoligase domain. Residue Ser14 participates in CTP binding. Ser14 is a UTP binding site. ATP is bound by residues 15–20 (SLGKGI) and Asp72. Mg(2+) is bound by residues Asp72 and Glu140. CTP contacts are provided by residues 147 to 149 (DIE), 187 to 192 (KTKPTQ), and Lys223. Residues 187–192 (KTKPTQ) and Lys223 each bind UTP. Residue 239 to 241 (KDV) participates in ATP binding. Residues 291–542 (TIGMVGKYTE…VKAAYENHKK (252 aa)) enclose the Glutamine amidotransferase type-1 domain. Gly352 lines the L-glutamine pocket. The active-site Nucleophile; for glutamine hydrolysis is the Cys379. Residues 380 to 383 (LGMQ), Glu403, and Arg470 each bind L-glutamine. Catalysis depends on residues His515 and Glu517.

The protein belongs to the CTP synthase family. Homotetramer.

The enzyme catalyses UTP + L-glutamine + ATP + H2O = CTP + L-glutamate + ADP + phosphate + 2 H(+). The catalysed reaction is L-glutamine + H2O = L-glutamate + NH4(+). It carries out the reaction UTP + NH4(+) + ATP = CTP + ADP + phosphate + 2 H(+). It participates in pyrimidine metabolism; CTP biosynthesis via de novo pathway; CTP from UDP: step 2/2. Allosterically activated by GTP, when glutamine is the substrate; GTP has no effect on the reaction when ammonia is the substrate. The allosteric effector GTP functions by stabilizing the protein conformation that binds the tetrahedral intermediate(s) formed during glutamine hydrolysis. Inhibited by the product CTP, via allosteric rather than competitive inhibition. Catalyzes the ATP-dependent amination of UTP to CTP with either L-glutamine or ammonia as the source of nitrogen. Regulates intracellular CTP levels through interactions with the four ribonucleotide triphosphates. The sequence is that of CTP synthase from Haemophilus influenzae (strain PittEE).